A 426-amino-acid polypeptide reads, in one-letter code: Bile acid CoA-transferase BaiF (426 aa).

Asp-168 acts as the Nucleophile in catalysis.

This sequence belongs to the CoA-transferase III family.

It catalyses the reaction lithocholoyl-CoA + cholate = choloyl-CoA + lithocholate. It carries out the reaction deoxycholoyl-CoA + cholate = choloyl-CoA + deoxycholate. The catalysed reaction is allodeoxycholoyl-CoA + cholate = allodeoxycholate + choloyl-CoA. The enzyme catalyses allocholate + deoxycholoyl-CoA = allocholoyl-CoA + deoxycholate. It catalyses the reaction allocholate + lithocholoyl-CoA = allocholoyl-CoA + lithocholate. It carries out the reaction allocholate + allodeoxycholoyl-CoA = allocholoyl-CoA + allodeoxycholate. The catalysed reaction is lithocholoyl-CoA + chenodeoxycholate = chenodeoxycholoyl-CoA + lithocholate. The enzyme catalyses ursodeoxycholate + deoxycholoyl-CoA = ursodeoxycholoyl-CoA + deoxycholate. It catalyses the reaction ursodeoxycholate + lithocholoyl-CoA = ursodeoxycholoyl-CoA + lithocholate. It carries out the reaction allodeoxycholoyl-CoA + ursodeoxycholate = ursodeoxycholoyl-CoA + allodeoxycholate. The catalysed reaction is beta-muricholate + lithocholoyl-CoA = beta-muricholoyl-CoA + lithocholate. The enzyme catalyses beta-muricholate + deoxycholoyl-CoA = beta-muricholoyl-CoA + deoxycholate. It catalyses the reaction beta-muricholate + allodeoxycholoyl-CoA = beta-muricholoyl-CoA + allodeoxycholate. It carries out the reaction choloyl-CoA + H2O = cholate + CoA + H(+). The catalysed reaction is chenodeoxycholoyl-CoA + H2O = chenodeoxycholate + CoA + H(+). It participates in lipid metabolism; bile acid biosynthesis. Functionally, functions in the bile acid 7alpha-dehydroxylation pathway, which forms secondary bile acids via the 7alpha-dehydroxylation of primary bile acids, and is carried out by intestinal anaerobic bacteria. Acts as a bile acid CoA transferase with broad bile acid substrate specificity. Catalyzes the transfer of the CoA moiety of secondary bile acid-CoA compounds to primary bile acids. Can use lithocholoyl-CoA, deoxycholoyl-CoA and allodeoxycholoyl-CoA as bile acid CoA donors and cholate, allocholate, chenodeoxycholate, ursodeoxycholate, and beta-muricholate as bile acid CoA acceptors. Also displays CoA hydrolase activity, being able to catalyze the hydrolysis of choloyl-CoA, 3-dehydrocholoyl-CoA, and chenodeoxycholoyl-CoA, releasing CoA and the corresponding free bile acid. However, this latter activity may not represent the actual activity of this enzyme, since using a transferase rather than hydrolase, the bacteria conserve the thioester bond energy, saving ATP molecules. Shows no hydrolytic activity with acetyl-CoA, isovaleryl-CoA, palmitoyl-CoA, or phenylacetyl-CoA as substrates. This chain is Bile acid CoA-transferase BaiF, found in Clostridium scindens (strain JCM 10418 / VPI 12708).